A 90-amino-acid chain; its full sequence is Protein A54 (90 aa).

The chain is Protein A54 from Homo sapiens (Human).